The primary structure comprises 258 residues: uncharacterized protein (258 aa).

N-linked (GlcNAc...) asparagine; by host glycosylation is found at N60, N104, and N113. Over residues 147–156 the composition is skewed to low complexity; the sequence is TTRKPGQKTT. Residues 147–183 are disordered; that stretch reads TTRKPGQKTTLSRLKTTPNKHTQHKRSTRRTSPRDYN. Positions 157 to 166 are enriched in polar residues; it reads LSRLKTTPNK. Over residues 167–177 the composition is skewed to basic residues; sequence HTQHKRSTRRT. N-linked (GlcNAc...) asparagine; by host glycosylation occurs at N183. The helical transmembrane segment at 208–228 threads the bilayer; that stretch reads AHSAWILIVIIIIIVVILFFF.

This sequence belongs to the RL11 family.

The protein resides in the membrane. This is an uncharacterized protein from Human cytomegalovirus (strain AD169) (HHV-5).